The following is a 425-amino-acid chain: Enolase (425 aa).

Glutamine 162 is a (2R)-2-phosphoglycerate binding site. The active-site Proton donor is the glutamate 204. Mg(2+)-binding residues include aspartate 241, glutamate 282, and aspartate 309. Positions 334, 363, 364, and 385 each coordinate (2R)-2-phosphoglycerate. The active-site Proton acceptor is lysine 334.

This sequence belongs to the enolase family. Requires Mg(2+) as cofactor.

The protein localises to the cytoplasm. Its subcellular location is the secreted. The protein resides in the cell surface. The catalysed reaction is (2R)-2-phosphoglycerate = phosphoenolpyruvate + H2O. It participates in carbohydrate degradation; glycolysis; pyruvate from D-glyceraldehyde 3-phosphate: step 4/5. Catalyzes the reversible conversion of 2-phosphoglycerate (2-PG) into phosphoenolpyruvate (PEP). It is essential for the degradation of carbohydrates via glycolysis. The chain is Enolase from Corynebacterium efficiens (strain DSM 44549 / YS-314 / AJ 12310 / JCM 11189 / NBRC 100395).